A 465-amino-acid polypeptide reads, in one-letter code: Fusarisetin A cluster transcription factor fsa5 (465 aa).

A DNA-binding region (zn(2)-C6 fungal-type) is located at residues 13–47 (CDRCRSHKLKCTVAPENTRSGSSRCTRCIRAQVTC). Positions 58-88 (STNVKKADLRSGTNGQETTSMQASTIVPGSP) are disordered. Polar residues predominate over residues 68–84 (SGTNGQETTSMQASTIV).

It is found in the nucleus. Its function is as follows. Transcription activator that specifically regulates the expression of the gene cluster that mediates the biosynthesis of fusarisetin A. This is Fusarisetin A cluster transcription factor fsa5 from Fusarium sp. (strain FN080326).